Reading from the N-terminus, the 350-residue chain is Holliday junction branch migration complex subunit RuvB (350 aa).

Positions 1-183 (MSAERLVNPH…FVAVHRLVFY (183 aa)) are large ATPase domain (RuvB-L). Residues Leu22, Arg23, Gly64, Lys67, Thr68, Ser69, 130 to 132 (EDF), Arg173, Tyr183, and Arg220 contribute to the ATP site. A Mg(2+)-binding site is contributed by Thr68. Positions 184 to 254 (SDAAMTEIVS…VAREALAQLE (71 aa)) are small ATPAse domain (RuvB-S). A head domain (RuvB-H) region spans residues 257–350 (ELGLDENDRR…ESGPQQGTLF (94 aa)). 2 residues coordinate DNA: Arg312 and Arg317.

The protein belongs to the RuvB family. As to quaternary structure, homohexamer. Forms an RuvA(8)-RuvB(12)-Holliday junction (HJ) complex. HJ DNA is sandwiched between 2 RuvA tetramers; dsDNA enters through RuvA and exits via RuvB. An RuvB hexamer assembles on each DNA strand where it exits the tetramer. Each RuvB hexamer is contacted by two RuvA subunits (via domain III) on 2 adjacent RuvB subunits; this complex drives branch migration. In the full resolvosome a probable DNA-RuvA(4)-RuvB(12)-RuvC(2) complex forms which resolves the HJ.

The protein resides in the cytoplasm. The enzyme catalyses ATP + H2O = ADP + phosphate + H(+). In terms of biological role, the RuvA-RuvB-RuvC complex processes Holliday junction (HJ) DNA during genetic recombination and DNA repair, while the RuvA-RuvB complex plays an important role in the rescue of blocked DNA replication forks via replication fork reversal (RFR). RuvA specifically binds to HJ cruciform DNA, conferring on it an open structure. The RuvB hexamer acts as an ATP-dependent pump, pulling dsDNA into and through the RuvAB complex. RuvB forms 2 homohexamers on either side of HJ DNA bound by 1 or 2 RuvA tetramers; 4 subunits per hexamer contact DNA at a time. Coordinated motions by a converter formed by DNA-disengaged RuvB subunits stimulates ATP hydrolysis and nucleotide exchange. Immobilization of the converter enables RuvB to convert the ATP-contained energy into a lever motion, pulling 2 nucleotides of DNA out of the RuvA tetramer per ATP hydrolyzed, thus driving DNA branch migration. The RuvB motors rotate together with the DNA substrate, which together with the progressing nucleotide cycle form the mechanistic basis for DNA recombination by continuous HJ branch migration. Branch migration allows RuvC to scan DNA until it finds its consensus sequence, where it cleaves and resolves cruciform DNA. The protein is Holliday junction branch migration complex subunit RuvB of Chloroflexus aggregans (strain MD-66 / DSM 9485).